The following is a 157-amino-acid chain: 6,7-dimethyl-8-ribityllumazine synthase 1 (157 aa).

5-amino-6-(D-ribitylamino)uracil is bound by residues Phe-22, 53 to 55 (ALE), and 82 to 84 (TVI). Residue 87–88 (ET) participates in (2S)-2-hydroxy-3-oxobutyl phosphate binding. Residue His-90 is the Proton donor of the active site. Asn-115 is a binding site for 5-amino-6-(D-ribitylamino)uracil. (2S)-2-hydroxy-3-oxobutyl phosphate is bound at residue His-129.

This sequence belongs to the DMRL synthase family. As to quaternary structure, homopentamer.

The catalysed reaction is (2S)-2-hydroxy-3-oxobutyl phosphate + 5-amino-6-(D-ribitylamino)uracil = 6,7-dimethyl-8-(1-D-ribityl)lumazine + phosphate + 2 H2O + H(+). The protein operates within cofactor biosynthesis; riboflavin biosynthesis; riboflavin from 2-hydroxy-3-oxobutyl phosphate and 5-amino-6-(D-ribitylamino)uracil: step 1/2. Catalyzes the formation of 6,7-dimethyl-8-ribityllumazine by condensation of 5-amino-6-(D-ribitylamino)uracil with 3,4-dihydroxy-2-butanone 4-phosphate. This is the penultimate step in the biosynthesis of riboflavin. This Brucella abortus (strain 2308) protein is 6,7-dimethyl-8-ribityllumazine synthase 1 (ribH1).